We begin with the raw amino-acid sequence, 256 residues long: 6-carboxyhexanoate--CoA ligase (256 aa).

The protein belongs to the BioW family. Homodimer. Requires Mg(2+) as cofactor.

The catalysed reaction is heptanedioate + ATP + CoA = 6-carboxyhexanoyl-CoA + AMP + diphosphate. It functions in the pathway metabolic intermediate metabolism; pimeloyl-CoA biosynthesis; pimeloyl-CoA from pimelate: step 1/1. Its function is as follows. Catalyzes the transformation of pimelate into pimeloyl-CoA with concomitant hydrolysis of ATP to AMP. The protein is 6-carboxyhexanoate--CoA ligase of Bacillus amyloliquefaciens (strain ATCC 23350 / DSM 7 / BCRC 11601 / CCUG 28519 / NBRC 15535 / NRRL B-14393 / F).